The primary structure comprises 1010 residues: Regulator of telomere elongation helicase 1 homolog (1010 aa).

In terms of domain architecture, Helicase ATP-binding spans 7-333 (NGITVNFPFE…KEMLLQLEKT (327 aa)). 42–49 (SPTGTGKT) is an ATP binding site. [4Fe-4S] cluster is bound by residues Cys157, Cys175, Cys184, and Cys220. The DEAH box motif lies at 263–266 (DEAH). Residues 912–931 (TSDDEDPGRTGDDPTRQAPE) are disordered. Over residues 918 to 931 (PGRTGDDPTRQAPE) the composition is skewed to basic and acidic residues.

Belongs to the helicase family. RAD3/XPD subfamily.

It localises to the nucleus. The enzyme catalyses ATP + H2O = ADP + phosphate + H(+). Functionally, a probable ATP-dependent DNA helicase implicated in DNA repair and the maintenance of genomic stability. Acts as an anti-recombinase to counteract toxic recombination and limit crossover during meiosis. Regulates meiotic recombination and crossover homeostasis by physically dissociating strand invasion events and thereby promotes noncrossover repair by meiotic synthesis dependent strand annealing (SDSA) as well as disassembly of D loop recombination intermediates. This chain is Regulator of telomere elongation helicase 1 homolog, found in Aedes aegypti (Yellowfever mosquito).